Consider the following 159-residue polypeptide: Ribosomal RNA large subunit methyltransferase H (159 aa).

S-adenosyl-L-methionine contacts are provided by residues leucine 76, glycine 108, and 127 to 132 (FSKMTF).

This sequence belongs to the RNA methyltransferase RlmH family. Homodimer.

Its subcellular location is the cytoplasm. The catalysed reaction is pseudouridine(1915) in 23S rRNA + S-adenosyl-L-methionine = N(3)-methylpseudouridine(1915) in 23S rRNA + S-adenosyl-L-homocysteine + H(+). Functionally, specifically methylates the pseudouridine at position 1915 (m3Psi1915) in 23S rRNA. This is Ribosomal RNA large subunit methyltransferase H from Clostridium botulinum (strain Okra / Type B1).